We begin with the raw amino-acid sequence, 193 residues long: Xanthine phosphoribosyltransferase (193 aa).

2 residues coordinate xanthine: L20 and N27. 127–131 (AYGNA) contacts 5-phospho-alpha-D-ribose 1-diphosphate. K155 contacts xanthine.

This sequence belongs to the purine/pyrimidine phosphoribosyltransferase family. Xpt subfamily. As to quaternary structure, homodimer.

Its subcellular location is the cytoplasm. The enzyme catalyses XMP + diphosphate = xanthine + 5-phospho-alpha-D-ribose 1-diphosphate. It functions in the pathway purine metabolism; XMP biosynthesis via salvage pathway; XMP from xanthine: step 1/1. Its function is as follows. Converts the preformed base xanthine, a product of nucleic acid breakdown, to xanthosine 5'-monophosphate (XMP), so it can be reused for RNA or DNA synthesis. In Porphyromonas gingivalis (strain ATCC BAA-308 / W83), this protein is Xanthine phosphoribosyltransferase.